The sequence spans 559 residues: Putative protease Do-like 3, mitochondrial (559 aa).

The N-terminal 48 residues, 1 to 48 (MSFLCVRTVSRFRSLSRALAPGFLLLHGNAVPKTAVFFRQQSSNTRLF), are a transit peptide targeting the mitochondrion. The disordered stretch occupies residues 59–81 (ENNSKSALKNKLPPGKEVSSKDA). The segment at 100 to 292 (VFTVSSKPRL…FLNAIEESGE (193 aa)) is serine protease. Catalysis depends on charge relay system residues histidine 138, aspartate 169, and serine 247. The PDZ domain maps to 300 to 380 (NLTYQKMDND…HLVSMKKPCE (81 aa)). The disordered stretch occupies residues 538-559 (SEDLQPKQQNKRSKVPPKSKEH). Residues 546–559 (QNKRSKVPPKSKEH) are compositionally biased toward basic residues.

It belongs to the peptidase S1C family.

The protein localises to the mitochondrion matrix. Its function is as follows. Putative serine protease. In Arabidopsis thaliana (Mouse-ear cress), this protein is Putative protease Do-like 3, mitochondrial (DEGP3).